The chain runs to 606 residues: MGPKRRQLTFREKSRIIQEVEENPDLRKGEIARRFNIPPSTLSTILKNKRAILASERKYGVASTCRKTNKLSPYDKLEGLLIAWFQQIRAAGLPVKGIILKEKALRIAEELGMDDFTASNGWLDRFRRRHGVVACSGVTRSRARTSTPRAPAAPAGPAAVPSEGSGGSTPGWRTREEQPPSVAEGYASQDVFSATETSLWYDFLSDQASGLWGGDGTARQATQRLSVLLCANRDGSEKLPPLVAGKSAKPRASQGGLPCDYTANSKGGVTTQALAKYLKALDTRMAAESRRVLLLAGRLAAQSLDTSGLRHVQLAFFPPGTVHPLERGVVQQVKGHYRQAMLLKAMAALEGQDPSGLQLGLVEALHFVAAAWQAVEPADIATCFREAGFGGGLNATITTSFKSEGEEEEEEEEEEEEEEEEEGEGEEEEEEEEEGEEEGGEGEEVGEEEEVEEEGDESDEEEEEEEEEEEESSSEGLEAEDWAQGVVEASGGFGGYSVQEEAQCPTLHFLEGGEDSDSDSDEEEEDEEEDEEDEEDDDDDEDGDEVPVPSFGEAMAYFAMVKRYLTSFPIDDRVQSHILHLEHDLVHVTRKNHAWQAGVRGLGHQS.

N,N,N-trimethylglycine is present on Gly2. The 51-residue stretch at 2-52 (GPKRRQLTFREKSRIIQEVEENPDLRKGEIARRFNIPPSTLSTILKNKRAI) folds into the HTH psq-type domain. 2 DNA-binding regions (H-T-H motif) span residues 28–48 (KGEI…ILKN) and 97–129 (GIIL…FRRR). The region spanning 65-136 (CRKTNKLSPY…RRRHGVVACS (72 aa)) is the HTH CENPB-type domain. A disordered region spans residues 138–184 (VTRSRARTSTPRAPAAPAGPAAVPSEGSGGSTPGWRTREEQPPSVAE). A compositionally biased stretch (low complexity) spans 144-163 (RTSTPRAPAAPAGPAAVPSE). A Phosphoserine modification is found at Ser165. A Glycyl lysine isopeptide (Lys-Gly) (interchain with G-Cter in SUMO2) cross-link involves residue Lys246. Disordered stretches follow at residues 392–480 (GLNA…LEAE) and 504–549 (CPTL…VPVP). 2 positions are modified to phosphothreonine: Thr396 and Thr398. Acidic residues-rich tracts occupy residues 405–480 (GEEE…LEAE) and 512–545 (GGED…DGDE). Residues 543–606 (GDEVPVPSFG…AGVRGLGHQS (64 aa)) form a homodimerization region.

As to quaternary structure, antiparallel homodimer. Interacts with CENPT. Identified in a centromere complex containing histones H2A, H2B and H4, and at least CENPA, CENPB, CENPC, CENPT, CENPN, HJURP, SUPT16H, SSRP1 and RSF1. Post-translationally, poly-ADP-ribosylated by PARP1. N-terminally methylated by METTL11A/NTM1. Alpha-N-methylation is stimulated in response to extracellular stimuli, including increased cell density and heat shock, and seems to facilitate binding to CENP-B boxes. Chromatin-bound CENP-B is primarily trimethylated.

It is found in the nucleus. The protein localises to the chromosome. The protein resides in the centromere. Its function is as follows. Interacts with centromeric heterochromatin in chromosomes and binds to a specific 17 bp subset of alphoid satellite DNA, called the CENP-B box. May organize arrays of centromere satellite DNA into a higher-order structure which then directs centromere formation and kinetochore assembly in mammalian chromosomes. The protein is Major centromere autoantigen B (CENPB) of Cricetulus griseus (Chinese hamster).